Reading from the N-terminus, the 695-residue chain is Lupanine 17-hydroxylase [cytochrome c] (695 aa).

An N-terminal signal peptide occupies residues 1–26; that stretch reads MSANKNIWIIRLGVAFVCVAIGAAQA. The Cytochrome c domain occupies 598–677; sequence AMAESGRHIF…ALQAFILQKA (80 aa). Heme c-binding residues include C612, C615, and H616.

The protein belongs to the bacterial PQQ dehydrogenase family. Monomer. Requires pyrroloquinoline quinone as cofactor. The cofactor is heme c.

Its subcellular location is the periplasm. It catalyses the reaction lupanine + 2 Fe(III)-[cytochrome c] + H2O = 17-hydroxylupanine + 2 Fe(II)-[cytochrome c] + 2 H(+). Functionally, catalyzes the first reaction in the catabolism of the alkaloid lupanine. It dehydrogenates lupanine, which can then be hydrated to produce 17-hydroxylupanine. This Pseudomonas sp protein is Lupanine 17-hydroxylase [cytochrome c] (luh).